The following is a 370-amino-acid chain: ATP/GTP phosphatase (370 aa).

It catalyses the reaction ATP + H2O = ADP + phosphate + H(+). It carries out the reaction GTP + H2O = GDP + phosphate + H(+). In terms of biological role, has nucleotide phosphatase activity toward ATP and GTP, but not toward CTP, TTP and ADP. In Helicobacter pylori (strain ATCC 700392 / 26695) (Campylobacter pylori), this protein is ATP/GTP phosphatase.